The primary structure comprises 210 residues: Ribonuclease HII (210 aa).

An RNase H type-2 domain is found at 16–207; sequence AIVVGVDEVG…VKKCIISTKN (192 aa). Positions 22, 23, and 116 each coordinate a divalent metal cation.

It belongs to the RNase HII family. Mn(2+) serves as cofactor. The cofactor is Mg(2+).

Its subcellular location is the cytoplasm. The enzyme catalyses Endonucleolytic cleavage to 5'-phosphomonoester.. Endonuclease that specifically degrades the RNA of RNA-DNA hybrids. The sequence is that of Ribonuclease HII from Anaplasma phagocytophilum (strain HZ).